The following is a 395-amino-acid chain: NAD(P)H-quinone oxidoreductase subunit H (395 aa).

Belongs to the complex I 49 kDa subunit family. As to quaternary structure, NDH-1 can be composed of about 15 different subunits; different subcomplexes with different compositions have been identified which probably have different functions.

Its subcellular location is the cellular thylakoid membrane. The catalysed reaction is a plastoquinone + NADH + (n+1) H(+)(in) = a plastoquinol + NAD(+) + n H(+)(out). It carries out the reaction a plastoquinone + NADPH + (n+1) H(+)(in) = a plastoquinol + NADP(+) + n H(+)(out). Functionally, NDH-1 shuttles electrons from an unknown electron donor, via FMN and iron-sulfur (Fe-S) centers, to quinones in the respiratory and/or the photosynthetic chain. The immediate electron acceptor for the enzyme in this species is believed to be plastoquinone. Couples the redox reaction to proton translocation, and thus conserves the redox energy in a proton gradient. Cyanobacterial NDH-1 also plays a role in inorganic carbon-concentration. This Prochlorococcus marinus (strain MIT 9515) protein is NAD(P)H-quinone oxidoreductase subunit H.